The following is a 241-amino-acid chain: Megakaryocyte and platelet inhibitory receptor G6b (241 aa).

The first 17 residues, 1 to 17, serve as a signal peptide directing secretion; that stretch reads MAVFLQLLPLLLSRAQG. Topologically, residues 18–142 are extracellular; the sequence is NPGASLDGRP…GPTHGSVYPQ (125 aa). An N-linked (GlcNAc...) asparagine glycan is attached at asparagine 32. A helical transmembrane segment spans residues 143 to 163; the sequence is LLIPLLGAGLVLGLGALGLVW. The Cytoplasmic portion of the chain corresponds to 164–241; that stretch reads WLHRRLPPQP…DASTIYAVVV (78 aa). Short sequence motifs (ITIM motif) lie at residues 209–214 and 235–240; these read LLYADL and TIYAVV. Tyrosine 211 is subject to Phosphotyrosine.

In terms of assembly, interacts (via ITIM motif) with PTPN6 and PTPN11. Binds to heparin. All isoforms are N-glycosylated. In terms of processing, isoform E is O-glycosylated. Post-translationally, phosphorylated. Expressed in platelets. Expressed in a restricted set of hematopoietic cell lines including the erythroleukemia cell line K-562 and the T-cell leukemia cell lines MOLT-4 and Jurkat. Not detected in the monocyte-like cell line U-937, the B-cell-like cell line Raji, the fibroblast cell lines TK and HeLa, or the natural killer cell lines NKL, NK 62 and YT.

Its subcellular location is the endoplasmic reticulum. The protein localises to the golgi apparatus. It is found in the cell membrane. In terms of biological role, inhibitory receptor that acts as a critical regulator of hematopoietic lineage differentiation, megakaryocyte function and platelet production. Inhibits platelet aggregation and activation by agonists such as ADP and collagen-related peptide. This regulation of megakaryocate function as well as platelet production ann activation is done through the inhibition (via the 2 ITIM motifs) of the receptors CLEC1B and GP6:FcRgamma signaling. Appears to operate in a calcium-independent manner. Its function is as follows. Isoform B, displayed in this entry, is the only isoform to contain both a transmembrane region and 2 immunoreceptor tyrosine-based inhibitor motifs (ITIMs) and, thus, the only one which probably has a role of inhibitory receptor. Isoform A may be the activating counterpart of isoform B. This chain is Megakaryocyte and platelet inhibitory receptor G6b, found in Homo sapiens (Human).